The chain runs to 1105 residues: Lysylphosphatidylglycerol biosynthesis bifunctional protein LysX (1105 aa).

Positions 1 to 603 are phosphatidylglycerol lysyltransferase; sequence MTVTKPRSVQ…LLHHDGSAPD (603 aa). Transmembrane regions (helical) follow at residues 20-40, 62-82, 86-106, 117-137, 154-174, 186-203, and 208-228; these read VPAAAGWAVGVIATLSLLASI, FPDTSFAWSFVLALLAAALAA, IAWLLLLTNVVLAAFLNAADI, FGENLGFAVHVVAIVVLVLGY, AVLVAGGAIGILVSWGLVELF, YVANRVIGFALADPDLFT, and VFLNAMFGLFGALALIAATIV. Residues 604 to 1105 form a lysine--tRNA ligase region; the sequence is VSGLRQSAIA…TLPFPLAKPH (502 aa). The Mg(2+) site is built by aspartate 1017 and glutamate 1024.

In the N-terminal section; belongs to the LPG synthetase family. The protein in the C-terminal section; belongs to the class-II aminoacyl-tRNA synthetase family. Requires Mg(2+) as cofactor.

The protein resides in the cell membrane. It carries out the reaction tRNA(Lys) + L-lysine + ATP = L-lysyl-tRNA(Lys) + AMP + diphosphate. The catalysed reaction is L-lysyl-tRNA(Lys) + a 1,2-diacyl-sn-glycero-3-phospho-(1'-sn-glycerol) = a 1,2-diacyl-sn-glycero-3-phospho-1'-(3'-O-L-lysyl)-sn-glycerol + tRNA(Lys). In terms of biological role, catalyzes the production of L-lysyl-tRNA(Lys)transfer and the transfer of a lysyl group from L-lysyl-tRNA(Lys) to membrane-bound phosphatidylglycerol (PG), which produces lysylphosphatidylglycerol (LPG), one of the components of the bacterial membrane with a positive net charge. LPG synthesis contributes to the resistance to cationic antimicrobial peptides (CAMPs) and likely protects M.tuberculosis against the CAMPs produced by competiting microorganisms (bacteriocins). In fact, the modification of anionic phosphatidylglycerol with positively charged L-lysine results in repulsion of the peptides. This is Lysylphosphatidylglycerol biosynthesis bifunctional protein LysX (lysX) from Mycobacterium marinum (strain ATCC BAA-535 / M).